The chain runs to 65 residues: Crotamine CRO1 (65 aa).

An N-terminal signal peptide occupies residues 1 to 22 (MKILYLLFAFLFLAFLSEPGNA). 3 disulfides stabilise this stretch: cysteine 26–cysteine 58, cysteine 33–cysteine 52, and cysteine 40–cysteine 59.

It belongs to the crotamine-myotoxin family. In terms of assembly, monomer. Expressed by the venom gland.

It is found in the secreted. Functionally, cationic peptide that possesses multiple functions. It acts as a cell-penetrating peptide (CPP), and as a potent voltage-gated potassium channel (Kv) inhibitor. It exhibits antimicrobial activities, hind limb paralysis, and severe muscle necrosis by a non-enzymatic mechanism. The chain is Crotamine CRO1 (CRO1) from Crotalus durissus terrificus (South American rattlesnake).